A 224-amino-acid polypeptide reads, in one-letter code: Ribose-5-phosphate isomerase A (224 aa).

Substrate is bound by residues 26–29 (TGST), 81–84 (DGAD), and 94–97 (KGGG). Glutamate 103 serves as the catalytic Proton acceptor. Lysine 121 contributes to the substrate binding site.

This sequence belongs to the ribose 5-phosphate isomerase family. As to quaternary structure, homodimer.

It catalyses the reaction aldehydo-D-ribose 5-phosphate = D-ribulose 5-phosphate. The protein operates within carbohydrate degradation; pentose phosphate pathway; D-ribose 5-phosphate from D-ribulose 5-phosphate (non-oxidative stage): step 1/1. Functionally, catalyzes the reversible conversion of ribose-5-phosphate to ribulose 5-phosphate. This chain is Ribose-5-phosphate isomerase A, found in Listeria monocytogenes serotype 4b (strain CLIP80459).